Here is a 526-residue protein sequence, read N- to C-terminus: MPSQAVFLVLTTVFSQCVGKFPIYTIPDKLGPWSPIDIHHLSCPNNLVVEDDGCTTLSGFTYMELKVGYITTIKVDGFTCTGIVTEAETYTNFVGYVTTTFKRKHFRPGPSACRDAYNWKAAGDPRYEESLHNPYPDSHWLRTVTTTKESLLIISPSVVDMDAYDKSLLSKIFPNGKCPGVSIASPFCSTNHDYTIWMPENTKTGMSCDIFTTSKGKRATKDGKLCGFVDERGLYKSLKGSCKLKLCGVSGLRLMDGSWVSIQNHEEAKWCPPDQLVNVHDFHSDEIEHLIVEELVKKREECLDALESIMTTKSISFRRLSHLRKLVPGFGKAYTIINKTLMEADAHYKSIREWSEIIPSKGCLVAGGRCYHHHNGVFFNGIILSPDGHVLIPEMQSALLQQHIELLESSVIPLMHPLADPSTVFKGDDGAEDFVEVHLPDVQKQISGIDLGLPEWKRYFLIGVAALTLFALTIFVVVCCRRVRRRERAKPNPVELIRKVSVTSQSGKVIPSWESYKVEAEGQSQA.

Residues 1–19 form the signal peptide; sequence MPSQAVFLVLTTVFSQCVG. Residues 20–459 lie on the Virion surface side of the membrane; it reads KFPIYTIPDK…DLGLPEWKRY (440 aa). A glycan (N-linked (GlcNAc...) asparagine; by host) is linked at asparagine 338. Residues 460-480 traverse the membrane as a helical segment; that stretch reads FLIGVAALTLFALTIFVVVCC. The S-palmitoyl cysteine; by host moiety is linked to residue cysteine 480. Residues 481 to 526 lie on the Intravirion side of the membrane; sequence RRVRRRERAKPNPVELIRKVSVTSQSGKVIPSWESYKVEAEGQSQA.

Belongs to the lyssavirus glycoprotein family. In terms of assembly, homotrimer. Interacts with matrix protein. Post-translationally, glycosylated and palmitoylated by host. Glycosylation is crucial for glycoprotein export at the cell surface.

It localises to the virion membrane. Functionally, attaches the virus to host cellular receptor, inducing endocytosis of the virion. In the endosome, the acidic pH induces conformational changes in the glycoprotein trimer, which trigger fusion between virus and cell membrane. There is convincing in vitro evidence that the muscular form of the nicotinic acetylcholine receptor (nAChR), the neuronal cell adhesion molecule (NCAM), and the p75 neurotrophin receptor (p75NTR) bind glycoprotein and thereby facilitate rabies virus entry into cells. The chain is Glycoprotein (G) from Khujand virus (KHUV).